A 270-amino-acid chain; its full sequence is Sulfur carrier protein FdhD (270 aa).

Basic and acidic residues-rich tracts occupy residues 1-10 and 20-30; these read MSMQDHDRTE and RHLDGSSRPDW. The segment at 1–30 is disordered; sequence MSMQDHDRTEQGMTSLAVTRHLDGSSRPDW. Catalysis depends on Cys117, which acts as the Cysteine persulfide intermediate.

This sequence belongs to the FdhD family.

Its subcellular location is the cytoplasm. In terms of biological role, required for formate dehydrogenase (FDH) activity. Acts as a sulfur carrier protein that transfers sulfur from IscS to the molybdenum cofactor prior to its insertion into FDH. This Chromobacterium violaceum (strain ATCC 12472 / DSM 30191 / JCM 1249 / CCUG 213 / NBRC 12614 / NCIMB 9131 / NCTC 9757 / MK) protein is Sulfur carrier protein FdhD.